Consider the following 41-residue polypeptide: Large ribosomal subunit protein bL36 (41 aa).

The segment at 1-21 is disordered; that stretch reads MKIRNSLKSLRGRHRDNQLVR.

Belongs to the bacterial ribosomal protein bL36 family.

The protein is Large ribosomal subunit protein bL36 of Methylobacterium sp. (strain 4-46).